Here is a 264-residue protein sequence, read N- to C-terminus: Astacin-like metalloprotease toxin 1 (264 aa).

Positions 1-16 (MIKYIGVFAFLVGGFC) are cleaved as a signal peptide. The propeptide occupies 17–51 (HDFETVISNQDPIVDGMRLVEGDMLFDDGPLFTER). One can recognise a Peptidase M12A domain in the interval 52–249 (NAVKYDQQLW…VKVNKLYKCP (198 aa)). Disulfide bonds link Cys93–Cys248 and Cys114–Cys135. Zn(2+) is bound at residue His143. Glu144 is a catalytic residue. 2 residues coordinate Zn(2+): His147 and His153. N-linked (GlcNAc...) asparagine glycosylation is found at Asn173 and Asn185.

Monomer. Zn(2+) is required as a cofactor. As to expression, expressed by the venom gland.

It localises to the secreted. Its activity is regulated as follows. Inhibited by 1,10-phenanthroline. In terms of biological role, zinc metalloprotease. Provoques deadhesion of endothelial cells from cell cultures, and also degradation of fibronectin, fibrinogen and gelatin in vitro. Its role in the venom is not fully understood but it might act as a spreading factor that facilitates diffusion of other venom toxins. Alternatively, it might be involved in the proteolytic processing of other venom toxins or it might play a role in extra-oral digestion of prey. In Loxosceles intermedia (Brown spider), this protein is Astacin-like metalloprotease toxin 1.